The following is a 278-amino-acid chain: Small ribosomal subunit protein uS3 (278 aa).

The KH type-2 domain occupies 39 to 107 (LRKAISKKYV…KVQLNIVEIS (69 aa)). The segment at 255 to 278 (AEIPAEEKPKRVVKKAENITKEEE) is disordered.

This sequence belongs to the universal ribosomal protein uS3 family. As to quaternary structure, part of the 30S ribosomal subunit. Forms a tight complex with proteins S10 and S14.

Functionally, binds the lower part of the 30S subunit head. Binds mRNA in the 70S ribosome, positioning it for translation. This Dehalococcoides mccartyi (strain ATCC BAA-2100 / JCM 16839 / KCTC 5957 / BAV1) protein is Small ribosomal subunit protein uS3.